The primary structure comprises 1844 residues: Non-structural replication polyprotein (1844 aa).

The Alphavirus-like MT domain occupies Ser58–Leu219. Positions Thr571–Asp739 are disordered. Residues Arg631–Glu641 are compositionally biased toward polar residues. A compositionally biased stretch (low complexity) spans Pro725 to Leu736. Residues Ser728–Ser879 enclose the OTU domain. A Peptidase C21 domain is found at Gln730–Lys884. Cys783 serves as the catalytic For protease activity. Residues Ile860–Ser888 are disordered. The GPP flap signature appears at Gly865–Pro867. His869 (for protease activity) is an active-site residue. Positions Thr946–Cys1103 constitute a (+)RNA virus helicase ATP-binding domain. Position 976–983 (Gly976–Thr983) interacts with a ribonucleoside 5'-triphosphate. The region spanning Trp1104–Pro1236 is the (+)RNA virus helicase C-terminal domain. The 107-residue stretch at Thr1572–Trp1678 folds into the RdRp catalytic domain.

The protein belongs to the Tymoviridae non-structural replication polyprotein family. In terms of assembly, interacts with host ubiquitin. In terms of processing, specific enzymatic cleavages by the host yield mature proteins.

Its subcellular location is the host chloroplast envelope. It carries out the reaction Thiol-dependent hydrolysis of ester, thioester, amide, peptide and isopeptide bonds formed by the C-terminal Gly of ubiquitin (a 76-residue protein attached to proteins as an intracellular targeting signal).. The catalysed reaction is RNA(n) + a ribonucleoside 5'-triphosphate = RNA(n+1) + diphosphate. In terms of biological role, acts as a cysteine protease, methyltransferase and deubiquitinase. The cysteine protease activity cleaves the polyprotein giving rise to mature proteins. The protease has the ability to process substrates in trans. The methyltransferase domain is probably involved in viral RNA capping. The deubiquitylating activity counteracts the degradation of the viral polymerase mediated by the host ubiquitin-proteasome system. The polymerase is thus stabilized and infectivity is increased. Favors K63 poly-Ub linkage. Functionally, RNA-directed RNA polymerase is responsible for the replication and transcription of the genome. This is Non-structural replication polyprotein from Turnip yellow mosaic virus (isolate Australia).